The primary structure comprises 243 residues: Type III pantothenate kinase (243 aa).

6-13 (DGGNTFIK) is an ATP binding site. Residues tyrosine 87 and 94–97 (GKDR) each bind substrate. Aspartate 96 functions as the Proton acceptor in the catalytic mechanism. Aspartate 117 contributes to the K(+) binding site. Residue threonine 120 coordinates ATP. Threonine 172 lines the substrate pocket.

Belongs to the type III pantothenate kinase family. Homodimer. NH4(+) serves as cofactor. K(+) is required as a cofactor.

It is found in the cytoplasm. The catalysed reaction is (R)-pantothenate + ATP = (R)-4'-phosphopantothenate + ADP + H(+). Its pathway is cofactor biosynthesis; coenzyme A biosynthesis; CoA from (R)-pantothenate: step 1/5. In terms of biological role, catalyzes the phosphorylation of pantothenate (Pan), the first step in CoA biosynthesis. This Christiangramia forsetii (strain DSM 17595 / CGMCC 1.15422 / KT0803) (Gramella forsetii) protein is Type III pantothenate kinase.